Consider the following 92-residue polypeptide: Conotoxin Mr15.2 (92 aa).

The first 20 residues, 1–20 (MSTLKMMLLILLLLLPMATF), serve as a signal peptide directing secretion. Residues 21–53 (DSDGQAIPGGGIPSAVNSRVGGDEKSGRSLEKR) constitute a propeptide that is removed on maturation. Residues 30 to 49 (GGIPSAVNSRVGGDEKSGRS) are disordered.

This sequence belongs to the conotoxin N superfamily. Post-translationally, contains 4 disulfide bonds. In terms of tissue distribution, expressed by the venom duct.

Its subcellular location is the secreted. The sequence is that of Conotoxin Mr15.2 from Conus marmoreus (Marble cone).